The chain runs to 84 residues: Exodeoxyribonuclease 7 small subunit (84 aa).

The protein belongs to the XseB family. In terms of assembly, heterooligomer composed of large and small subunits.

Its subcellular location is the cytoplasm. The enzyme catalyses Exonucleolytic cleavage in either 5'- to 3'- or 3'- to 5'-direction to yield nucleoside 5'-phosphates.. In terms of biological role, bidirectionally degrades single-stranded DNA into large acid-insoluble oligonucleotides, which are then degraded further into small acid-soluble oligonucleotides. This Yersinia enterocolitica serotype O:8 / biotype 1B (strain NCTC 13174 / 8081) protein is Exodeoxyribonuclease 7 small subunit.